The primary structure comprises 202 residues: Guanylyl cyclase-activating protein 1 (202 aa).

Gly-2 carries the N-myristoyl glycine lipid modification. A Deamidated asparagine modification is found at Asn-3. EF-hand domains follow at residues 31 to 49 (SGQLTLYEFRQFFGLKNLS), 51 to 86 (SASQYVEQMFETFDFNKDGYIDFMEYVAALSLVLKG), 87 to 122 (KVEQKLRWYFKLYDVDGNGCIDRDELLTIIRAIRTI), and 131 to 166 (SAEEFTDTVFAKIDINGDGELSLEEFMEGVQKDQML). Asp-64, Asn-66, Asp-68, Tyr-70, Glu-75, Asp-100, Asp-102, Asn-104, Cys-106, Glu-111, Asp-144, Asn-146, Asp-148, Glu-150, and Glu-155 together coordinate Ca(2+).

In terms of assembly, homodimer. In terms of tissue distribution, in the retina, expressed in rod photoreceptors (at protein level). Expressed in cone photoreceptors.

The protein resides in the membrane. It localises to the photoreceptor inner segment. The protein localises to the cell projection. It is found in the cilium. Its subcellular location is the photoreceptor outer segment. Its function is as follows. Stimulates retinal guanylyl cyclase when free calcium ions concentration is low and inhibits guanylyl cyclase when free calcium ions concentration is elevated. This Ca(2+)-sensitive regulation of retinal guanylyl cyclase is a key event in recovery of the dark state of rod photoreceptors following light exposure. May be involved in cone photoreceptor light response and recovery of response in bright light. This is Guanylyl cyclase-activating protein 1 (Guca1a) from Mus musculus (Mouse).